Consider the following 386-residue polypeptide: uncharacterized protein (386 aa).

It belongs to the TelA family.

This is an uncharacterized protein from Bacillus subtilis (strain 168).